Reading from the N-terminus, the 308-residue chain is Cilia- and flagella-associated protein 73 (308 aa).

Coiled coils occupy residues 103–134 and 164–227; these read RIQKEKEIEQLTEVLEELKSEKERILEVLEKN and LSAT…QEAK.

It belongs to the CFAP73 family. As to quaternary structure, interacts with FAP100; form the modifier of inner arm (MIA) complex.

It localises to the cytoplasm. The protein resides in the cytoskeleton. The protein localises to the flagellum axoneme. In terms of biological role, as part of MIA, a complex associated with the outer doublet microtubules of the axoneme, may play a role in ciliary/flagellar motility by regulating the assembly and the activity of inner dynein arm. This chain is Cilia- and flagella-associated protein 73, found in Chlamydomonas reinhardtii (Chlamydomonas smithii).